The sequence spans 265 residues: 4-hydroxy-tetrahydrodipicolinate reductase (265 aa).

NAD(+) contacts are provided by residues 9 to 14, 100 to 102, and 124 to 127; these read GALGRM, GTT, and SPNM. His158 acts as the Proton donor/acceptor in catalysis. Residue His159 participates in (S)-2,3,4,5-tetrahydrodipicolinate binding. Lys162 (proton donor) is an active-site residue. 168 to 169 is a binding site for (S)-2,3,4,5-tetrahydrodipicolinate; sequence GT.

It belongs to the DapB family.

It is found in the cytoplasm. It catalyses the reaction (S)-2,3,4,5-tetrahydrodipicolinate + NAD(+) + H2O = (2S,4S)-4-hydroxy-2,3,4,5-tetrahydrodipicolinate + NADH + H(+). The catalysed reaction is (S)-2,3,4,5-tetrahydrodipicolinate + NADP(+) + H2O = (2S,4S)-4-hydroxy-2,3,4,5-tetrahydrodipicolinate + NADPH + H(+). It functions in the pathway amino-acid biosynthesis; L-lysine biosynthesis via DAP pathway; (S)-tetrahydrodipicolinate from L-aspartate: step 4/4. Functionally, catalyzes the conversion of 4-hydroxy-tetrahydrodipicolinate (HTPA) to tetrahydrodipicolinate. In Aquifex aeolicus (strain VF5), this protein is 4-hydroxy-tetrahydrodipicolinate reductase.